Consider the following 417-residue polypeptide: Type II methyltransferase M.Eco47II (417 aa).

The region spanning 81 to 414 (YTVLELFAGA…KSVVHLLDKI (334 aa)) is the SAM-dependent MTase C5-type domain. The active site involves cysteine 153.

Belongs to the class I-like SAM-binding methyltransferase superfamily. C5-methyltransferase family.

It catalyses the reaction a 2'-deoxycytidine in DNA + S-adenosyl-L-methionine = a 5-methyl-2'-deoxycytidine in DNA + S-adenosyl-L-homocysteine + H(+). In terms of biological role, a methylase that recognizes the double-stranded sequence 5'-GGNCC-3', methylates C-? on both strands, and protects the DNA from cleavage by both the Eco47I and Eco47II endonucleases. This Escherichia coli protein is Type II methyltransferase M.Eco47II.